Consider the following 278-residue polypeptide: MSSKSQLTYGARASKHPNPLAKRLFEIAEAKKTNVTVSADVTTTRELLDLADRLGPYIAVIKTHIDILTDFSVDTINGLNVLAQKHNFLIFEDRKFIDIGNTVQKQYHGGALRISEWAHIINCSVLPGEGIVEALAQTASAQDFPYGPERGLLVLAEMTSKGSLATGEYTKASVDYARKYKNFVMGFVSTRALTEVQSDVSSASEDEDFVVFTTGVNLSSKGDKLGQQYQTPASAIGRGADFIIAGRGIYAAPDPVEAAQRYQKEGWEAYMARVCGKS.

Substrate-binding positions include D40, 62-64 (KTH), 93-102 (DRKFIDIGNT), Y229, and R247. K95 (proton donor) is an active-site residue.

The protein belongs to the OMP decarboxylase family.

It carries out the reaction orotidine 5'-phosphate + H(+) = UMP + CO2. It functions in the pathway pyrimidine metabolism; UMP biosynthesis via de novo pathway; UMP from orotate: step 2/2. This is Orotidine 5'-phosphate decarboxylase (pyrG) from Aspergillus fumigatus (strain ATCC MYA-4609 / CBS 101355 / FGSC A1100 / Af293) (Neosartorya fumigata).